Consider the following 79-residue polypeptide: Conotoxin VnMKLT1-01121 (79 aa).

An N-terminal signal peptide occupies residues 1–22; that stretch reads MKLTCMMIVAVLFLTAWTFVTA. Positions 23–48 are excised as a propeptide; it reads DDSRNGLEYLFPKAHYEMNPEASKLN. Disulfide bonds link C53–C70, C60–C74, and C69–C78.

Belongs to the conotoxin O1 superfamily. As to expression, expressed by the venom duct.

It is found in the secreted. This chain is Conotoxin VnMKLT1-01121, found in Conus ventricosus (Mediterranean cone).